Consider the following 292-residue polypeptide: Protein/nucleic acid deglycase HchA (292 aa).

Over residues 1–12 (MSQDVNELSKQP) the composition is skewed to polar residues. Positions 1 to 23 (MSQDVNELSKQPTPDKAEDNAFF) are disordered. The Nucleophile role is filled by Cys-190.

This sequence belongs to the peptidase C56 family. HchA subfamily.

The protein localises to the cytoplasm. It catalyses the reaction N(omega)-(1-hydroxy-2-oxopropyl)-L-arginyl-[protein] + H2O = lactate + L-arginyl-[protein] + H(+). The catalysed reaction is N(6)-(1-hydroxy-2-oxopropyl)-L-lysyl-[protein] + H2O = lactate + L-lysyl-[protein] + H(+). The enzyme catalyses S-(1-hydroxy-2-oxopropyl)-L-cysteinyl-[protein] + H2O = lactate + L-cysteinyl-[protein] + H(+). It carries out the reaction N(omega)-(1-hydroxy-2-oxoethyl)-L-arginyl-[protein] + H2O = L-arginyl-[protein] + glycolate + H(+). It catalyses the reaction N(6)-(1-hydroxy-2-oxoethyl)-L-lysyl-[protein] + H2O = glycolate + L-lysyl-[protein] + H(+). The catalysed reaction is S-(1-hydroxy-2-oxoethyl)-L-cysteinyl-[protein] + H2O = glycolate + L-cysteinyl-[protein] + H(+). The enzyme catalyses N(2)-(1-hydroxy-2-oxopropyl)-dGTP + H2O = lactate + dGTP + H(+). It carries out the reaction N(2)-(1-hydroxy-2-oxopropyl)-GTP + H2O = lactate + GTP + H(+). It catalyses the reaction N(2)-(1-hydroxy-2-oxopropyl)-GDP + H2O = lactate + GDP + H(+). The catalysed reaction is N(2)-(1-hydroxy-2-oxopropyl)-GMP + H2O = lactate + GMP + H(+). The enzyme catalyses N(2)-(1-hydroxy-2-oxoethyl)-dGTP + H2O = dGTP + glycolate + H(+). It carries out the reaction N(2)-(1-hydroxy-2-oxoethyl)-GTP + H2O = glycolate + GTP + H(+). It catalyses the reaction N(2)-(1-hydroxy-2-oxoethyl)-GDP + H2O = glycolate + GDP + H(+). The catalysed reaction is N(2)-(1-hydroxy-2-oxoethyl)-GMP + H2O = glycolate + GMP + H(+). The enzyme catalyses an N(2)-(1-hydroxy-2-oxopropyl)-guanosine in RNA + H2O = a guanosine in RNA + lactate + H(+). It carries out the reaction an N(2)-(1-hydroxy-2-oxopropyl)-2'-deoxyguanosine in DNA + H2O = a 2'-deoxyguanosine in DNA + lactate + H(+). It catalyses the reaction an N(2)-(1-hydroxy-2-oxoethyl)-guanosine in RNA + H2O = a guanosine in RNA + glycolate + H(+). The catalysed reaction is an N(2)-(1-hydroxy-2-oxoethyl)-2'-deoxyguanosine in DNA + H2O = a 2'-deoxyguanosine in DNA + glycolate + H(+). Protein and nucleotide deglycase that catalyzes the deglycation of the Maillard adducts formed between amino groups of proteins or nucleotides and reactive carbonyl groups of glyoxals. Thus, functions as a protein deglycase that repairs methylglyoxal- and glyoxal-glycated proteins, and releases repaired proteins and lactate or glycolate, respectively. Deglycates cysteine, arginine and lysine residues in proteins, and thus reactivates these proteins by reversing glycation by glyoxals. Acts on early glycation intermediates (hemithioacetals and aminocarbinols), preventing the formation of Schiff bases and advanced glycation endproducts (AGE). Also functions as a nucleotide deglycase able to repair glycated guanine in the free nucleotide pool (GTP, GDP, GMP, dGTP) and in DNA and RNA. Is thus involved in a major nucleotide repair system named guanine glycation repair (GG repair), dedicated to reversing methylglyoxal and glyoxal damage via nucleotide sanitization and direct nucleic acid repair. Plays an important role in protecting cells from carbonyl stress. The chain is Protein/nucleic acid deglycase HchA from Staphylococcus aureus (strain MSSA476).